A 449-amino-acid polypeptide reads, in one-letter code: Probable glycine dehydrogenase (decarboxylating) subunit 1 (449 aa).

This sequence belongs to the GcvP family. N-terminal subunit subfamily. In terms of assembly, the glycine cleavage system is composed of four proteins: P, T, L and H. In this organism, the P 'protein' is a heterodimer of two subunits.

It catalyses the reaction N(6)-[(R)-lipoyl]-L-lysyl-[glycine-cleavage complex H protein] + glycine + H(+) = N(6)-[(R)-S(8)-aminomethyldihydrolipoyl]-L-lysyl-[glycine-cleavage complex H protein] + CO2. In terms of biological role, the glycine cleavage system catalyzes the degradation of glycine. The P protein binds the alpha-amino group of glycine through its pyridoxal phosphate cofactor; CO(2) is released and the remaining methylamine moiety is then transferred to the lipoamide cofactor of the H protein. In Rhodospirillum centenum (strain ATCC 51521 / SW), this protein is Probable glycine dehydrogenase (decarboxylating) subunit 1.